The following is a 167-amino-acid chain: Translationally-controlled tumor protein homolog (167 aa).

The TCTP domain occupies 1 to 167; it reads MIIYTDIISG…WKHGVKAEKI (167 aa).

It belongs to the TCTP family.

The protein localises to the cytoplasm. It is found in the cytoskeleton. Its function is as follows. Involved in protein synthesis. Involved in microtubule stabilization. The chain is Translationally-controlled tumor protein homolog from Kluyveromyces lactis (strain ATCC 8585 / CBS 2359 / DSM 70799 / NBRC 1267 / NRRL Y-1140 / WM37) (Yeast).